A 198-amino-acid polypeptide reads, in one-letter code: HTH-type transcriptional regulator BetI (198 aa).

Residues 8–68 (PIRRQQLIDA…ATMRYLISHL (61 aa)) form the HTH tetR-type domain. Positions 31-50 (TIAQIARRAGVSNGIISHYF) form a DNA-binding region, H-T-H motif.

It functions in the pathway amine and polyamine biosynthesis; betaine biosynthesis via choline pathway [regulation]. Functionally, repressor involved in the biosynthesis of the osmoprotectant glycine betaine. It represses transcription of the choline transporter BetT and the genes of BetAB involved in the synthesis of glycine betaine. This Serratia proteamaculans (strain 568) protein is HTH-type transcriptional regulator BetI.